The chain runs to 227 residues: Thiocyanate methyltransferase 1 (227 aa).

S-adenosyl-L-methionine is bound by residues Trp36, Trp40, Trp47, and Gly74. Ser86 carries the post-translational modification Phosphoserine. S-adenosyl-L-methionine contacts are provided by residues Asp95, 123 to 124 (DV), and Tyr139.

It belongs to the class I-like SAM-binding methyltransferase superfamily. TPMT family. Expressed in shoots, leaves, stems, inflorescences, flowers and green siliques.

It catalyses the reaction thiocyanate + S-adenosyl-L-methionine = methyl thiocyanate + S-adenosyl-L-homocysteine. Functionally, S-adenosyl-L-methionine-dependent methyltransferase. Involved in glucosinolate metabolism and defense against phytopathogens. Highly reactive to thiocyanate (NCS(-)) derived from myrosinase-mediated hydrolysis of glucosinolates upon tissue damage. In Arabidopsis thaliana (Mouse-ear cress), this protein is Thiocyanate methyltransferase 1.